Here is a 181-residue protein sequence, read N- to C-terminus: Protein Syd (181 aa).

It belongs to the Syd family.

It localises to the cell inner membrane. Its function is as follows. Interacts with the SecY protein in vivo. May bind preferentially to an uncomplexed state of SecY, thus functioning either as a chelating agent for excess SecY in the cell or as a regulatory factor that negatively controls the translocase function. This Escherichia coli O157:H7 protein is Protein Syd.